The chain runs to 437 residues: Aspartic proteinase CDR1 (437 aa).

The first 25 residues, 1-25 (MASLFSSVLLSLCLLSSLFLSNANA), serve as a signal peptide directing secretion. Residues 26 to 73 (KPKLGFTADLIHRDSPKSPFYNPMETSSQRLRNAIHRSVNRVFHFTEK) constitute a propeptide, activation peptide. The Peptidase A1 domain occupies 90–430 (YLMNVSIGTP…DTVSKTVSFK (341 aa)). A glycan (N-linked (GlcNAc...) asparagine) is linked at Asn93. Residues Asp108 and Asp319 contribute to the active site.

Belongs to the peptidase A1 family.

It localises to the secreted. The protein localises to the extracellular space. It is found in the apoplast. Its function is as follows. Involved in salicylic acid-dependent inducible resistance responses. May release an endogenous peptide elicitor required for the activation of inducible resistance mechanisms. Possesses protease activity in vitro. This is Aspartic proteinase CDR1 (CDR1) from Arabidopsis thaliana (Mouse-ear cress).